The chain runs to 383 residues: tRNA-specific 2-thiouridylase MnmA (383 aa).

Residues 9 to 16 (GMSGGVDS) and Met-35 contribute to the ATP site. An interaction with target base in tRNA region spans residues 95–97 (NPD). Residue Cys-100 is the Nucleophile of the active site. A disulfide bridge connects residues Cys-100 and Cys-198. Gly-124 serves as a coordination point for ATP. The segment at 148 to 150 (KDQ) is interaction with tRNA. The Cysteine persulfide intermediate role is filled by Cys-198. The segment at 310 to 311 (RY) is interaction with tRNA.

This sequence belongs to the MnmA/TRMU family.

The protein resides in the cytoplasm. The enzyme catalyses S-sulfanyl-L-cysteinyl-[protein] + uridine(34) in tRNA + AH2 + ATP = 2-thiouridine(34) in tRNA + L-cysteinyl-[protein] + A + AMP + diphosphate + H(+). Its function is as follows. Catalyzes the 2-thiolation of uridine at the wobble position (U34) of tRNA, leading to the formation of s(2)U34. In Paraburkholderia phytofirmans (strain DSM 17436 / LMG 22146 / PsJN) (Burkholderia phytofirmans), this protein is tRNA-specific 2-thiouridylase MnmA.